Consider the following 416-residue polypeptide: Phosphoglycerate kinase (416 aa).

Substrate-binding positions include 28 to 30 (DMN), R44, 65 to 68 (HQSR), R122, and R162. ATP-binding positions include E337 and 362-365 (GGHI).

The protein belongs to the phosphoglycerate kinase family. As to quaternary structure, monomer.

The protein resides in the cytoplasm. It carries out the reaction (2R)-3-phosphoglycerate + ATP = (2R)-3-phospho-glyceroyl phosphate + ADP. It participates in carbohydrate degradation; glycolysis; pyruvate from D-glyceraldehyde 3-phosphate: step 2/5. In Methanosarcina mazei (strain ATCC BAA-159 / DSM 3647 / Goe1 / Go1 / JCM 11833 / OCM 88) (Methanosarcina frisia), this protein is Phosphoglycerate kinase.